Reading from the N-terminus, the 40-residue chain is Photosystem II reaction center protein J (40 aa).

Residues 8-28 form a helical membrane-spanning segment; sequence IPLWLIGTVTGIIVIGLLGVF.

It belongs to the PsbJ family. PSII is composed of 1 copy each of membrane proteins PsbA, PsbB, PsbC, PsbD, PsbE, PsbF, PsbH, PsbI, PsbJ, PsbK, PsbL, PsbM, PsbT, PsbX, PsbY, PsbZ, Psb30/Ycf12, at least 3 peripheral proteins of the oxygen-evolving complex and a large number of cofactors. It forms dimeric complexes.

It localises to the plastid. The protein resides in the chloroplast thylakoid membrane. Functionally, one of the components of the core complex of photosystem II (PSII). PSII is a light-driven water:plastoquinone oxidoreductase that uses light energy to abstract electrons from H(2)O, generating O(2) and a proton gradient subsequently used for ATP formation. It consists of a core antenna complex that captures photons, and an electron transfer chain that converts photonic excitation into a charge separation. This is Photosystem II reaction center protein J from Pinus thunbergii (Japanese black pine).